A 421-amino-acid chain; its full sequence is Forkhead box protein fkh-4 (421 aa).

The segment at residues 118–218 (RPPISYVALC…SDADFDFFRK (101 aa)) is a DNA-binding region (fork-head).

The protein localises to the nucleus. In terms of biological role, transcription factor. Regulates expression of a class of small RNAs, known as 21U-RNAs, perhaps acting redundantly with fkh-3 and fkh-5. This is Forkhead box protein fkh-4 from Caenorhabditis elegans.